Reading from the N-terminus, the 578-residue chain is 2-succinyl-5-enolpyruvyl-6-hydroxy-3-cyclohexene-1-carboxylate synthase (578 aa).

The interval 186 to 208 is disordered; it reads LPAAGGEHHPAEPRSTPWDGPVP.

Belongs to the TPP enzyme family. MenD subfamily. In terms of assembly, homodimer. Requires Mg(2+) as cofactor. Mn(2+) serves as cofactor. The cofactor is thiamine diphosphate.

It catalyses the reaction isochorismate + 2-oxoglutarate + H(+) = 5-enolpyruvoyl-6-hydroxy-2-succinyl-cyclohex-3-ene-1-carboxylate + CO2. Its pathway is quinol/quinone metabolism; 1,4-dihydroxy-2-naphthoate biosynthesis; 1,4-dihydroxy-2-naphthoate from chorismate: step 2/7. The protein operates within cofactor biosynthesis; phylloquinone biosynthesis. Functionally, catalyzes the thiamine diphosphate-dependent decarboxylation of 2-oxoglutarate and the subsequent addition of the resulting succinic semialdehyde-thiamine pyrophosphate anion to isochorismate to yield 2-succinyl-5-enolpyruvyl-6-hydroxy-3-cyclohexene-1-carboxylate (SEPHCHC). The chain is 2-succinyl-5-enolpyruvyl-6-hydroxy-3-cyclohexene-1-carboxylate synthase from Synechococcus sp. (strain WH7803).